A 269-amino-acid chain; its full sequence is Mitochondrial S-adenosylmethionine carrier protein (269 aa).

Solcar repeat units follow at residues 4-77 (REFC…AKQL), 85-167 (LSPI…LKDL), and 176-264 (VDSW…VRTL). 6 helical membrane passes run 5 to 25 (EFCA…LILF), 49 to 69 (IYAG…AFFV), 84 to 104 (YLSP…ACLI), 141 to 161 (RGYK…FPLW), 181 to 201 (SAVC…PLDV), and 237 to 257 (FAGV…FLGA).

The protein belongs to the mitochondrial carrier (TC 2.A.29) family.

It is found in the mitochondrion inner membrane. It carries out the reaction S-adenosyl-L-homocysteine(out) + S-adenosyl-L-methionine(in) = S-adenosyl-L-homocysteine(in) + S-adenosyl-L-methionine(out). In terms of biological role, mitochondrial S-adenosyl-L-methionine/S-adenosyl-L-homocysteine antiporter. Mediates the exchange of cytosolic S-adenosyl-L-methionine, the predominant methyl-group donor for macromolecule methylation processes, for mitochondrial S-adenosylhomocysteine(SAH), a by-product of methylation reactions. This Xenopus tropicalis (Western clawed frog) protein is Mitochondrial S-adenosylmethionine carrier protein (slc25a26).